Reading from the N-terminus, the 78-residue chain is Serine--glyoxylate aminotransferase (78 aa).

Belongs to the class-V pyridoxal-phosphate-dependent aminotransferase family. In terms of assembly, homodimer. Pyridoxal 5'-phosphate is required as a cofactor. Expressed in leaves but not in root tissue or seedlings.

The protein resides in the peroxisome. It carries out the reaction glyoxylate + L-serine = 3-hydroxypyruvate + glycine. The enzyme catalyses glyoxylate + L-alanine = glycine + pyruvate. Inhibited by aminooxyacetate. The protein is Serine--glyoxylate aminotransferase of Triticum aestivum (Wheat).